The following is a 343-amino-acid chain: MNIHRSTPITIARYGRSRNKTQDFEELSSIRSAEPSQSFSPNLGSPSPPETPNLSHCVSCIGKYLLLEPLEGDHVFRAVHLHSGEELVCKVFDISCYQESLAPCFCLSAHSNINQITEIILGETKAYVFFERSYGDMHSFVRTCKKLREEEAARLFYQIASAVAHCHDGGLVLRDLKLRKFIFKDEERTRVKLESLEDAYILRGDDDSLSDKHGCPAYVSPEILNTSGSYSGKAADVWSLGVMLYTMLVGRYPFHDIEPSSLFSKIRRGQFNIPETLSPKAKCLIRSILRREPSERLTSQEILDHPWFSTDFSVSNSGYGAKEVSDQLVPDVNMEENLDPFFN.

The disordered stretch occupies residues 25 to 50 (EELSSIRSAEPSQSFSPNLGSPSPPE). Residues 29 to 45 (SIRSAEPSQSFSPNLGS) are compositionally biased toward polar residues. One can recognise a Protein kinase domain in the interval 61–308 (IGKYLLLEPL…SQEILDHPWF (248 aa)).

It belongs to the protein kinase superfamily. CAMK Ser/Thr protein kinase family. Tribbles subfamily. As to expression, highly expressed in the thyroid, also present in ovary and cerebrum.

It is found in the cytoplasm. Its subcellular location is the cytoskeleton. In terms of biological role, interacts with MAPK kinases and regulates activation of MAP kinases. Does not display kinase activity. This is Tribbles homolog 2 from Canis lupus familiaris (Dog).